A 98-amino-acid chain; its full sequence is NADH-ubiquinone oxidoreductase chain 4L (98 aa).

The next 3 helical transmembrane spans lie at 1-21, 26-46, and 61-81; these read MPLISTNILLAFITALLGVLI, LMSSLLCLEGMMLSMFILVSL, and LILLVFAACEAAVGLALLVMV.

Belongs to the complex I subunit 4L family. As to quaternary structure, core subunit of respiratory chain NADH dehydrogenase (Complex I) which is composed of 45 different subunits.

The protein resides in the mitochondrion inner membrane. It catalyses the reaction a ubiquinone + NADH + 5 H(+)(in) = a ubiquinol + NAD(+) + 4 H(+)(out). Functionally, core subunit of the mitochondrial membrane respiratory chain NADH dehydrogenase (Complex I) which catalyzes electron transfer from NADH through the respiratory chain, using ubiquinone as an electron acceptor. Part of the enzyme membrane arm which is embedded in the lipid bilayer and involved in proton translocation. The sequence is that of NADH-ubiquinone oxidoreductase chain 4L (MT-ND4L) from Nycticebus coucang (Slow loris).